Consider the following 65-residue polypeptide: Putative beta-neurotoxin RjAa7 (65 aa).

Residues 1-64 (KEGYPVGRDG…VWDSSTNKCG (64 aa)) form the LCN-type CS-alpha/beta domain. Cystine bridges form between Cys11–Cys63, Cys15–Cys37, Cys22–Cys44, and Cys26–Cys46.

Belongs to the long (4 C-C) scorpion toxin superfamily. Sodium channel inhibitor family. Beta subfamily. As to expression, expressed by the venom gland.

The protein localises to the secreted. Its function is as follows. Beta toxins bind voltage-independently at site-4 of sodium channels (Nav) and shift the voltage of activation toward more negative potentials thereby affecting sodium channel activation and promoting spontaneous and repetitive firing. The sequence is that of Putative beta-neurotoxin RjAa7 from Rhopalurus junceus (Caribbean blue scorpion).